The sequence spans 432 residues: 3-phosphoshikimate 1-carboxyvinyltransferase (432 aa).

K23, S24, and R28 together coordinate 3-phosphoshikimate. Phosphoenolpyruvate is bound at residue K23. 2 residues coordinate phosphoenolpyruvate: G95 and R123. S167, Q169, D316, and K343 together coordinate 3-phosphoshikimate. Residue Q169 participates in phosphoenolpyruvate binding. D316 functions as the Proton acceptor in the catalytic mechanism. R347 and R391 together coordinate phosphoenolpyruvate.

The protein belongs to the EPSP synthase family. Monomer.

The protein localises to the cytoplasm. It carries out the reaction 3-phosphoshikimate + phosphoenolpyruvate = 5-O-(1-carboxyvinyl)-3-phosphoshikimate + phosphate. It participates in metabolic intermediate biosynthesis; chorismate biosynthesis; chorismate from D-erythrose 4-phosphate and phosphoenolpyruvate: step 6/7. In terms of biological role, catalyzes the transfer of the enolpyruvyl moiety of phosphoenolpyruvate (PEP) to the 5-hydroxyl of shikimate-3-phosphate (S3P) to produce enolpyruvyl shikimate-3-phosphate and inorganic phosphate. This Limosilactobacillus fermentum (strain NBRC 3956 / LMG 18251) (Lactobacillus fermentum) protein is 3-phosphoshikimate 1-carboxyvinyltransferase.